A 299-amino-acid chain; its full sequence is UDP-N-acetylenolpyruvoylglucosamine reductase (299 aa).

In terms of domain architecture, FAD-binding PCMH-type spans 28-193 (KVGGPADILA…LSAKFELQAG (166 aa)). Residue arginine 172 is part of the active site. Residue serine 222 is the Proton donor of the active site. Residue glutamate 292 is part of the active site.

The protein belongs to the MurB family. The cofactor is FAD.

The protein localises to the cytoplasm. The enzyme catalyses UDP-N-acetyl-alpha-D-muramate + NADP(+) = UDP-N-acetyl-3-O-(1-carboxyvinyl)-alpha-D-glucosamine + NADPH + H(+). The protein operates within cell wall biogenesis; peptidoglycan biosynthesis. Functionally, cell wall formation. In Lactococcus lactis subsp. cremoris (strain SK11), this protein is UDP-N-acetylenolpyruvoylglucosamine reductase.